The primary structure comprises 185 residues: HTH-type transcriptional regulator Hpr (185 aa).

Positions 13–157 constitute an HTH marR-type domain; the sequence is AMIFSQRIAQ…LIAILRNIYG (145 aa). The segment at residues 63–86 is a DNA-binding region (H-T-H motif); the sequence is ISEIAKFGVMHVSTAFNFSKKLEE.

As to quaternary structure, homodimer.

Functionally, negative regulator of protease production and sporulation. The sequence is that of HTH-type transcriptional regulator Hpr from Bacillus anthracis (strain CDC 684 / NRRL 3495).